We begin with the raw amino-acid sequence, 182 residues long: Ribulose bisphosphate carboxylase small subunit, chloroplastic (182 aa).

The N-terminal 58 residues, 1–58 (MASSMISSATVATVSRATPAQATMVAPFTGLKSTAAFPATRKSNNDITSLASNGGRVQ), are a transit peptide targeting the chloroplast.

Belongs to the RuBisCO small chain family. Heterohexadecamer of 8 large and 8 small subunits.

It localises to the plastid. The protein resides in the chloroplast. Functionally, ruBisCO catalyzes two reactions: the carboxylation of D-ribulose 1,5-bisphosphate, the primary event in carbon dioxide fixation, as well as the oxidative fragmentation of the pentose substrate. Both reactions occur simultaneously and in competition at the same active site. Although the small subunit is not catalytic it is essential for maximal activity. The chain is Ribulose bisphosphate carboxylase small subunit, chloroplastic from Fagus crenata (Japanese beech).